Consider the following 674-residue polypeptide: MRLNPGQQHAVEFVTGPCLVLAGAGSGKTRVITNKIAHLIRGCGYQARHIAAVTFTNKAAREMKERVGQTLGRKEARGLMISTFHTLGLDIIKREYAALGMKSNFSLFDDTDQVALLKELTEGLIEDDKVLLQQLISTISNWKNDLKTPAQAAAGAKGERDRIFAHCYGLYDAHMKACNVLDFDDLILLPTLLLQRNDEVRERWQNKIRYLLVDEYQDTNTSQYELVKLLVGQRARFTVVGDDDQSIYSWRGARPQNLVLLSQDFPALQVIKLEQNYRSSGRILKAANILIANNPHVFEKRLFSELGYGAELKVLSANNEEHEAERVTGELIAHHFVNKTQYKDYAILYRGNHQSRVFEKFLMQNRIPYKISGGTSFFSRPEIKDLLAYLRVLTNPDDDSAFLRIVNTPKREIGPATLQKLGEWAMTRNKSLFTASFDMGLSQKLTGRGYDSLTRFTHWLGEIQRLAEREPVAAVRDLIHGIDYESWLYETSPSPKAAEMRMKNVNQLFSWMTEMLEGNELDEPMTLTQVVTRFTLRDMMERGESEEELDQVQLMTLHASKGLEFPYVYMVGMEEGFLPHQSSIDEDNIEEERRLAYVGITRAQKELTFTLCKERRQYGELVRPEPSRFLLELPQDDLIWEQERKVVSAEERMQKGQSHLANLKAMMAAKRAKS.

The UvrD-like helicase ATP-binding domain maps to 1–280 (MRLNPGQQHA…IKLEQNYRSS (280 aa)). Residues 22-29 (AGAGSGKT) and Arg278 each bind ATP. In terms of domain architecture, UvrD-like helicase C-terminal spans 281–562 (GRILKAANIL…QLMTLHASKG (282 aa)).

This sequence belongs to the helicase family. UvrD subfamily. As to quaternary structure, homodimer.

The enzyme catalyses Couples ATP hydrolysis with the unwinding of duplex DNA by translocating in the 3'-5' direction.. It carries out the reaction ATP + H2O = ADP + phosphate + H(+). In terms of biological role, rep helicase is a single-stranded DNA-dependent ATPase involved in DNA replication; it can initiate unwinding at a nick in the DNA. It binds to the single-stranded DNA and acts in a progressive fashion along the DNA in the 3' to 5' direction. In Salmonella typhimurium (strain LT2 / SGSC1412 / ATCC 700720), this protein is ATP-dependent DNA helicase Rep.